A 666-amino-acid polypeptide reads, in one-letter code: Collagen alpha-1(XXV) chain (666 aa).

The interval 1 to 24 is disordered; the sequence is MLVKKLAGKGGGRESGSEDPRPLG. Residues 1–33 lie on the Cytoplasmic side of the membrane; the sequence is MLVKKLAGKGGGRESGSEDPRPLGQRCAGTMPS. The span at 11 to 21 shows a compositional bias: basic and acidic residues; sequence GGRESGSEDPR. The chain crosses the membrane as a helical; Signal-anchor for type II membrane protein span at residues 34-54; sequence CTALATLLSVVAVAFCFYLGV. The Extracellular segment spans residues 55–666; the sequence is KTNDLQARIA…GLPMPGCWQK (612 aa). The disordered stretch occupies residues 116 to 168; it reads LECNCPAGPPGKRGKRGRRGESGPPGQPGPQGPPGPKGDKGEQGDQGPRMVFP. Residues 121–164 enclose the Collagen-like 1 domain; sequence PAGPPGKRGKRGRRGESGPPGQPGPQGPPGPKGDKGEQGDQGPR. The segment covering 140 to 151 has biased composition (pro residues); that stretch reads PGQPGPQGPPGP. The segment at 181 to 188 is interaction with amyloid-beta peptide; the sequence is LIKRRLIK. Disordered stretches follow at residues 189–428 and 445–666; these read GDQG…ATEI and LTVT…CWQK. Collagen-like domains follow at residues 192 to 247, 249 to 308, 311 to 370, 373 to 425, 455 to 514, 529 to 588, and 589 to 648; these read GQAG…QKGS, GAPG…PGSS, GIKG…AGPP, GERG…DPGA, GPQG…KGEK, GPPG…KGAM, and GEPG…DGLD. A compositionally biased stretch (pro residues) spans 196-208; sequence PPGPPGPPGPRGP. Positions 230–245 are enriched in low complexity; the sequence is PGEQGLMGPLGPPGQK. Residues 280-290 show a composition bias toward basic and acidic residues; that stretch reads EPGKEGEKGDA. The segment covering 336–358 has biased composition (low complexity); it reads LPGIKGEPGFIGPQGEPGLPGLP. Composition is skewed to basic and acidic residues over residues 361 to 377 and 398 to 407; these read KGDR…ERGD and SKGDRGDKGD. A compositionally biased stretch (low complexity) spans 457–466; that stretch reads QGLQGPKGEQ. The segment covering 494-503 has biased composition (gly residues); the sequence is GEKGGLGLPG. Residues 528–543 show a composition bias toward pro residues; that stretch reads IGPPGPPGPHGPPGPM. Residues 615 to 638 show a composition bias toward basic and acidic residues; that stretch reads RGEKGDLGEKGEKGFRGVKGEKGE.

In terms of assembly, forms homodimers and homotrimers. Binds to the fibrillized forms of amyloid-beta protein 40 (beta-APP40) and amyloid-betad protein 42 (beta-APP42). Found associated with beta-APP42 more frequently than with beta-APP40. Undergoes proteolytic cleavage by furin protease to yield the soluble collagen-like Alzheimer amyloid plaque component. In terms of processing, glycosylated. Post-translationally, hydroxylated on proline and lysine residues. In terms of tissue distribution, expressed predominantly in neurons with low levels also detected in heart, testis and eye.

It localises to the membrane. Inhibits fibrillization of amyloid-beta peptide during the elongation phase. Has also been shown to assemble amyloid fibrils into protease-resistant aggregates. Binds heparin. The sequence is that of Collagen alpha-1(XXV) chain from Mus musculus (Mouse).